Here is a 554-residue protein sequence, read N- to C-terminus: 3-(3-hydroxy-phenyl)propionate/3-hydroxycinnamic acid hydroxylase (554 aa).

Residues 17–46 (QVAI…VVEK) and 285–295 (FRINRVLLAGD) contribute to the FAD site.

The protein belongs to the PheA/TfdB FAD monooxygenase family. FAD serves as cofactor.

It carries out the reaction 3-(3-hydroxyphenyl)propanoate + NADH + O2 + H(+) = 3-(2,3-dihydroxyphenyl)propanoate + NAD(+) + H2O. It catalyses the reaction (2E)-3-(3-hydroxyphenyl)prop-2-enoate + NADH + O2 + H(+) = (2E)-3-(2,3-dihydroxyphenyl)prop-2-enoate + NAD(+) + H2O. The protein operates within aromatic compound metabolism; 3-phenylpropanoate degradation. Its function is as follows. Catalyzes the insertion of one atom of molecular oxygen into position 2 of the phenyl ring of 3-(3-hydroxyphenyl)propionate (3-HPP) and hydroxycinnamic acid (3HCI). The sequence is that of 3-(3-hydroxy-phenyl)propionate/3-hydroxycinnamic acid hydroxylase from Klebsiella pneumoniae subsp. pneumoniae (strain ATCC 700721 / MGH 78578).